Consider the following 390-residue polypeptide: Protein PIN-LIKES 3 (390 aa).

Topologically, residues 1 to 14 (MVKLLELFITSSKP) are lumenal. The helical transmembrane segment at 15 to 35 (VVEILLITSVGFYMALDGVNL) threads the bilayer. At 36 to 43 (LGHDARKY) the chain is on the cytoplasmic side. Residues 44-61 (LNNIVFYVFSPSLIGSRL) traverse the membrane as a helical segment. Topologically, residues 62 to 76 (ADSVTYESLVKMWFM) are lumenal. A helical transmembrane segment spans residues 77 to 97 (PVNVLLTFIIGSLLGWIVIVI). Over 98-107 (TKPPSHLRGL) the chain is Cytoplasmic. Residues 108–128 (ILGCCAAGNLGNMPLIIIPAV) form a helical membrane-spanning segment. Over 129–144 (CKEKGGPFGDPESCQK) the chain is Lumenal. The helical transmembrane segment at 145–165 (YGMGYVALSMAMGSIYIWTYV) threads the bilayer. At 166–227 (YNLMRVLSNS…SLSQKVNLKT (62 aa)) the chain is on the cytoplasmic side. A helical membrane pass occupies residues 228-248 (IFAPSTIAAMIALVIGLITPL). Topologically, residues 249 to 265 (RKLIIGTEAPLRVLQDS) are lumenal. Residues 266-286 (VTLVGDGAVPAMTMIIGGNLL) form a helical membrane-spanning segment. At 287–297 (KGLRSSGMKMS) the chain is on the cytoplasmic side. The chain crosses the membrane as a helical span at residues 298 to 318 (SIIGVLVARYVLLPMSGVLIV). At 319–331 (RGAYKLDLVTSEP) the chain is on the lumenal side. A helical membrane pass occupies residues 332 to 352 (LYQFVLLLQYAVPPAMNLGTI). Over 353 to 364 (TQLFGTGESECS) the chain is Cytoplasmic. Residues 365–385 (VIMLWTYSLASIALTVWPTFF) form a helical membrane-spanning segment. Over 386 to 390 (MWLVA) the chain is Lumenal.

Belongs to the auxin efflux carrier (TC 2.A.69.2) family. In terms of tissue distribution, expressed in seedlings, rosette and cauline leaves, flowers and siliques.

It localises to the endoplasmic reticulum membrane. Involved in cellular auxin homeostasis by regulating auxin metabolism. Regulates intracellular auxin accumulation at the endoplasmic reticulum and thus auxin availability for nuclear auxin signaling. This is Protein PIN-LIKES 3 (PILS3) from Arabidopsis thaliana (Mouse-ear cress).